A 236-amino-acid chain; its full sequence is Phosphoribosylaminoimidazole-succinocarboxamide synthase (236 aa).

The protein belongs to the SAICAR synthetase family.

The enzyme catalyses 5-amino-1-(5-phospho-D-ribosyl)imidazole-4-carboxylate + L-aspartate + ATP = (2S)-2-[5-amino-1-(5-phospho-beta-D-ribosyl)imidazole-4-carboxamido]succinate + ADP + phosphate + 2 H(+). It functions in the pathway purine metabolism; IMP biosynthesis via de novo pathway; 5-amino-1-(5-phospho-D-ribosyl)imidazole-4-carboxamide from 5-amino-1-(5-phospho-D-ribosyl)imidazole-4-carboxylate: step 1/2. The chain is Phosphoribosylaminoimidazole-succinocarboxamide synthase from Pseudomonas syringae pv. syringae (strain B728a).